The following is a 473-amino-acid chain: Ral-GDS-related protein (473 aa).

Positions 117–215 (EPNEAKPDDP…NQPSEELPDM (99 aa)) are disordered. A compositionally biased stretch (low complexity) spans 134–157 (ALTMPALEPAPPLLADLGPALEPE). Residues 173 to 185 (GPAPAPGEGPPPG) show a composition bias toward pro residues. Positions 219–471 (PPRLLAEQLT…YKLSCQLEPE (253 aa)) constitute a Ras-GEF domain.

The protein resides in the cytoplasmic vesicle. This Homo sapiens (Human) protein is Ral-GDS-related protein (RGL4).